A 322-amino-acid polypeptide reads, in one-letter code: MKAERQTGLRNSFTTVIGRKLINTFVPSMMLTSVAGNDIFFRGLFKSPVLAFQSYRYVSILGQLKPSDGSTKSFKRLGRGPSSGLGKTSGRGQKGQKARGKVKSWFEGGQTPIYKLFPKIGFTNVGAKPLKELNLKRIQWFHDKNRLHLQPGEVLDMNKMRKLGLVTGPIKYGVKILASGKFHYNLPIALEASRASAKAIAAIEKAGGKFTARYYTPLGLRAHLNPQWFLEKRGRVPLQARPTKRRDIDFYSKEEKRGYLVMEKDKLLQDIKEAQNKGSRHFLKQNVKKSSLEIELEELSPEKDWVPVVSNSKVMNIKALDH.

The transit peptide at 1–57 directs the protein to the mitochondrion; the sequence is MKAERQTGLRNSFTTVIGRKLINTFVPSMMLTSVAGNDIFFRGLFKSPVLAFQSYRY. Positions 69-99 are disordered; it reads GSTKSFKRLGRGPSSGLGKTSGRGQKGQKAR. Gly residues predominate over residues 81 to 93; the sequence is PSSGLGKTSGRGQ.

This sequence belongs to the universal ribosomal protein uL15 family. In terms of assembly, component of the mitochondrial large ribosomal subunit (mt-LSU). Mature yeast 74S mitochondrial ribosomes consist of a small (37S) and a large (54S) subunit. The 37S small subunit contains a 15S ribosomal RNA (15S mt-rRNA) and 34 different proteins. The 54S large subunit contains a 21S rRNA (21S mt-rRNA) and 46 different proteins.

The protein localises to the mitochondrion. Its function is as follows. Component of the mitochondrial ribosome (mitoribosome), a dedicated translation machinery responsible for the synthesis of mitochondrial genome-encoded proteins, including at least some of the essential transmembrane subunits of the mitochondrial respiratory chain. The mitoribosomes are attached to the mitochondrial inner membrane and translation products are cotranslationally integrated into the membrane. The sequence is that of Large ribosomal subunit protein uL15m (MRPL10) from Saccharomyces cerevisiae (strain ATCC 204508 / S288c) (Baker's yeast).